Here is a 686-residue protein sequence, read N- to C-terminus: U-box domain-containing protein 19 (686 aa).

The region spanning L277–V351 is the U-box domain. ARM repeat units follow at residues T406 to K445, A448 to S489, G491 to M533, P536 to E577, and P579 to H620.

The catalysed reaction is S-ubiquitinyl-[E2 ubiquitin-conjugating enzyme]-L-cysteine + [acceptor protein]-L-lysine = [E2 ubiquitin-conjugating enzyme]-L-cysteine + N(6)-ubiquitinyl-[acceptor protein]-L-lysine.. Its pathway is protein modification; protein ubiquitination. Functionally, functions as an E3 ubiquitin ligase. This Arabidopsis thaliana (Mouse-ear cress) protein is U-box domain-containing protein 19 (PUB19).